The following is a 147-amino-acid chain: Hemoglobin subunit beta (147 aa).

Val-2 is modified (N-acetylvaline). Positions 3-147 (HLTGDEKAAV…VANALAHKYH (145 aa)) constitute a Globin domain. Thr-13 carries the post-translational modification Phosphothreonine. Phosphoserine is present on Ser-45. Lys-60 is modified (N6-acetyllysine). His-64 contacts heme b. Lys-83 carries the post-translational modification N6-acetyllysine. Position 93 (His-93) interacts with heme b. Cys-94 carries the S-nitrosocysteine modification. An N6-acetyllysine modification is found at Lys-145.

It belongs to the globin family. Heterotetramer of two alpha chains and two beta chains. In terms of tissue distribution, red blood cells.

Functionally, involved in oxygen transport from the lung to the various peripheral tissues. This is Hemoglobin subunit beta (HBB) from Saimiri sciureus (Common squirrel monkey).